Reading from the N-terminus, the 147-residue chain is DNA polymerase III subunit chi (147 aa).

This sequence belongs to the DNA polymerase III chi/HolC chain family. The DNA polymerase III holoenzyme complex contains at least 10 different subunits organized into 3 functionally essential subassemblies: the Pol III core, the beta sliding clamp processivity factor and the clamp-loading complex. The Pol III core (subunits alpha, epsilon and theta) contains the polymerase and the 3'-5' exonuclease proofreading activities. The polymerase is tethered to the template via the dimeric beta sliding clamp processivity factor. The clamp-loading complex (also called gamma complex) assembles the beta sliding clamp onto the primed template and plays a central role in the organization and communication at the replication fork. The clamp-loading complex contains delta, delta', psi and chi, and 3 copies of either or both of two different DnaX proteins, gamma and tau. The DNA replisome complex has a single clamp loader (3 tau and 1 each of delta, delta', psi and chi subunits) which binds 3 Pol III cores (1 core on the leading strand and 2 on the lagging strand) each with a beta sliding clamp dimer. Additional proteins in the replisome are other copies of gamma, psi (holD) and chi (this protein), SSB, DNA helicase and RNA primase. The clamp loader hydrolyzes ATP to assemble the beta processivity factor onto the primed template and plays a central role in the organization and communication at the replication fork. The only subunit of the DNA polymerase III holoenzyme known to interact with single-stranded DNA binding protein (SSB). Interacts directly with the psi subunit (holD). Interacts directly with DNA helicase YoaA. It binds to HolD and YoaA, but not both simultaneously.

It catalyses the reaction DNA(n) + a 2'-deoxyribonucleoside 5'-triphosphate = DNA(n+1) + diphosphate. Its function is as follows. Part of the beta sliding clamp loading complex, which hydrolyzes ATP to load the beta clamp onto primed DNA to form the DNA replication pre-initiation complex. DNA polymerase III is a complex, multichain enzyme responsible for most of the replicative synthesis in bacteria. This DNA polymerase also exhibits 3' to 5' exonuclease activity. Genetically identified as involved in the repair of replication forks and tolerance of the chain-terminating nucleoside analog 3' AZT. This subunit may stabilize YoaA and/or stimulate the helicase activity of YoaA. The protein is DNA polymerase III subunit chi of Escherichia coli (strain K12).